The primary structure comprises 803 residues: Zinc finger and BTB domain-containing protein 17 (803 aa).

In terms of domain architecture, BTB spans 1–104; it reads MDFPQHSQHV…VATFLQMQDI (104 aa). The tract at residues 116–295 is disordered; that stretch reads EPATSPGGNA…GLRSGTYGDR (180 aa). Position 120 is a phosphoserine (S120). The segment covering 132–142 has biased composition (basic and acidic residues); that stretch reads GGDKRAKEEKV. Composition is skewed to low complexity over residues 171 to 180 and 206 to 217; these read GQAQSAASGA and AAAEAEAALSES. Composition is skewed to acidic residues over residues 233–244 and 261–272; these read EQKEQEEQEEEG and EAPEENENEESA. The segment at 269–308 is interaction with MYC; that stretch reads EESAGTDSGQELGSEARGLRSGTYGDRTESKAYGSVIHKC. C2H2-type zinc fingers lie at residues 306–328, 334–356, 362–384, 390–412, 418–440, 446–468, 474–496, 502–524, 530–552, 558–580, 586–608, 614–637, and 717–739; these read HKCE…IRIH, FSCR…EKTH, YGCE…KKRH, YRCE…QLVH, YQCD…LETH, HKCP…LKIH, LKCR…LRIH, YVCI…VRIH, CQCV…VRQH, YVCE…IRHH, HKCS…IIIH, YLCD…KTVH, and YACD…VRIH. K397 participates in a covalent cross-link: Glycyl lysine isopeptide (Lys-Gly) (interchain with G-Cter in ubiquitin). K481 participates in a covalent cross-link: Glycyl lysine isopeptide (Lys-Gly) (interchain with G-Cter in ubiquitin). The interval 637–718 is interaction with MYC; it reads HQGKAGIKIL…EDPNTHILYA (82 aa). The segment at 637–803 is interaction with HCFC1; that stretch reads HQGKAGIKIL…TAPECPPPAE (167 aa). The interval 779-803 is disordered; the sequence is RDGAEGQPALAETSPTAPECPPPAE.

This sequence belongs to the krueppel C2H2-type zinc-finger protein family. As to quaternary structure, homooligomerizes (via the BTB/POZ domain), multimerization is required for DNA binding. Interacts (via the C-terminal zinc fingers) with GIF1; the interaction results in the recruitment of MYB to the CDKN1A/p21 and CDKN1B promoters and repression of transcription. Interacts with TRAF2, interfering with the binding of UBC13 to TRAF2, and inhibiting TRAF2 E3 ligase activity. Interacts with MYC (via the C-terminal helix-loop-helix motif); the interaction inhibits ZBTB17 transactivation and growth arrest activities and renders it insoluble in the nucleus. Also interacts with HCFC1, MAGEA4 and TMPRSS11A. Interacts with BCL6; the interaction inhibits ZBTB17 transactivation activity on target genes involved in cell cycle arrest. Interacts with ZBTB49 isoform 3/ZNF509S1; this interaction blocks ZBTB17-mediated repression of RB1. Post-translationally, undergoes 'Lys-48'-linked polyubiquitination at Lys-397 and Lys-481 and subsequent proteasomal degradation in a TRAF2-dependent manner. In terms of tissue distribution, expressed in germinal center B-cells.

It is found in the nucleus. Functionally, transcription factor that can function as an activator or repressor depending on its binding partners, and by targeting negative regulators of cell cycle progression. Plays a critical role in early lymphocyte development, where it is essential to prevent apoptosis in lymphoid precursors, allowing them to survive in response to IL7 and undergo proper lineage commitment. Has been shown to bind to the promoters of adenovirus major late protein and cyclin D1 and activate transcription. Required for early embryonic development during gastrulation. Represses RB1 transcription; this repression can be blocked by interaction with ZBTB49 isoform 3/ZNF509S1. In Homo sapiens (Human), this protein is Zinc finger and BTB domain-containing protein 17 (ZBTB17).